The following is a 961-amino-acid chain: Mitogen-activated protein kinase kinase kinase 13-A (961 aa).

Residues 88-118 (LRDQDEPENTAPQGSSHSGDGGSYSGNEDIR) are disordered. One can recognise a Protein kinase domain in the interval 169–410 (ISELQWLGSG…FRQILMHLDI (242 aa)). Residues 175 to 183 (LGSGAQGAV) and Lys-196 contribute to the ATP site. The active-site Proton acceptor is Asp-280. Leucine-zipper regions lie at residues 434–455 (VKKH…DEEL) and 487–508 (LSAI…EQAV). The stretch at 458–497 (RRREELRHALDIREHYERKLERANNLYMELSAIMLQLEVR) forms a coiled coil. Disordered regions lie at residues 513 to 600 (PGTY…SKGS), 615 to 637 (ALSQ…CSPY), and 799 to 883 (RRIR…KLDD). Positions 560–578 (SAEGSAASASPISGSPKTS) are enriched in low complexity. Residues 584–596 (NRYRSKPRHRRVN) are compositionally biased toward basic residues. A compositionally biased stretch (acidic residues) spans 810–823 (ESSEEEEGEVDSEV). Residues 811–824 (SSEEEEGEVDSEVE) form an acidic region. A compositionally biased stretch (polar residues) spans 837–851 (KCQSYSTFSSENFSV).

It belongs to the protein kinase superfamily. Ser/Thr protein kinase family.

It localises to the cytoplasm. The protein localises to the membrane. It carries out the reaction L-seryl-[protein] + ATP = O-phospho-L-seryl-[protein] + ADP + H(+). The enzyme catalyses L-threonyl-[protein] + ATP = O-phospho-L-threonyl-[protein] + ADP + H(+). Its function is as follows. May have a role in the JNK signaling pathway. This chain is Mitogen-activated protein kinase kinase kinase 13-A (map3k13-a), found in Xenopus laevis (African clawed frog).